Here is a 133-residue protein sequence, read N- to C-terminus: Small ribosomal subunit protein uS8 (133 aa).

The protein belongs to the universal ribosomal protein uS8 family. In terms of assembly, part of the 30S ribosomal subunit. Contacts proteins S5 and S12.

Functionally, one of the primary rRNA binding proteins, it binds directly to 16S rRNA central domain where it helps coordinate assembly of the platform of the 30S subunit. This chain is Small ribosomal subunit protein uS8, found in Chlamydia felis (strain Fe/C-56) (Chlamydophila felis).